We begin with the raw amino-acid sequence, 494 residues long: Cobyric acid synthase (494 aa).

Positions 252 to 444 (DLNIAVIRLP…LHGLFDNGPW (193 aa)) constitute a GATase cobBQ-type domain. Catalysis depends on C333, which acts as the Nucleophile. H436 is a catalytic residue.

The protein belongs to the CobB/CobQ family. CobQ subfamily.

The protein operates within cofactor biosynthesis; adenosylcobalamin biosynthesis. Functionally, catalyzes amidations at positions B, D, E, and G on adenosylcobyrinic A,C-diamide. NH(2) groups are provided by glutamine, and one molecule of ATP is hydrogenolyzed for each amidation. The protein is Cobyric acid synthase of Nostoc punctiforme (strain ATCC 29133 / PCC 73102).